A 128-amino-acid polypeptide reads, in one-letter code: Cyclin-dependent protein kinase inhibitor SMR1 (128 aa).

The segment at P17–A74 is disordered. Positions S57–A71 are enriched in pro residues.

Interacts with CDKB1-1. Interacts with CPR5. In terms of tissue distribution, expressed in roots, leaves, stems, siliques and flowers. Expressed in the root elongation zone.

Its subcellular location is the nucleus. Functionally, probable cyclin-dependent protein kinase (CDK) inhibitor that functions as a repressor of mitosis in the endoreduplication cell cycle. Cooperates with SIM and SMR2 to promote endoreplication during leaf development. Specifically regulates endoreduplication in epidermal pavement cells to produce the cell size pattern. Is necessary for giant cell formation. Positive regulator of effector-triggered immunity (ETI). The protein is Cyclin-dependent protein kinase inhibitor SMR1 of Arabidopsis thaliana (Mouse-ear cress).